The following is a 183-amino-acid chain: Gene BABR protein 2 (183 aa).

This is Gene BABR protein 2 from Babesia bovis.